We begin with the raw amino-acid sequence, 214 residues long: Endoplasmic reticulum vesicle protein 25 (214 aa).

The N-terminal stretch at 1–20 (MRSISTLLFIISTFISLVSA) is a signal peptide. Residues 21–183 (LQLAIPATTN…TNESTNSRVK (163 aa)) are Lumenal-facing. The region spanning 33–124 (PFCIRDFVQE…VREIELDVES (92 aa)) is the GOLD domain. Residues 184–204 (WFSILVITSLVGLGAWQVQYL) form a helical membrane-spanning segment. The Cytoplasmic portion of the chain corresponds to 205–214 (RHYFKVKHII).

The protein belongs to the EMP24/GP25L family.

It is found in the endoplasmic reticulum membrane. Its subcellular location is the golgi apparatus membrane. Constituent of COPII-coated endoplasmic reticulum-derived transport vesicles. Required for efficient transport of a subset of secretory proteins to the Golgi. Facilitates retrograde transport from the Golgi to the endoplasmic reticulum. The sequence is that of Endoplasmic reticulum vesicle protein 25 (ERV25) from Debaryomyces hansenii (strain ATCC 36239 / CBS 767 / BCRC 21394 / JCM 1990 / NBRC 0083 / IGC 2968) (Yeast).